The sequence spans 643 residues: Phosphomethylpyrimidine synthase (643 aa).

Substrate-binding positions include Asn248, Met277, Tyr306, His342, 362-364 (SRG), 403-406 (DGLR), and Glu442. His446 contributes to the Zn(2+) binding site. Tyr469 serves as a coordination point for substrate. Residue His510 participates in Zn(2+) binding. [4Fe-4S] cluster contacts are provided by Cys590, Cys593, and Cys598.

The protein belongs to the ThiC family. In terms of assembly, homodimer. [4Fe-4S] cluster is required as a cofactor.

It catalyses the reaction 5-amino-1-(5-phospho-beta-D-ribosyl)imidazole + S-adenosyl-L-methionine = 4-amino-2-methyl-5-(phosphooxymethyl)pyrimidine + CO + 5'-deoxyadenosine + formate + L-methionine + 3 H(+). Its pathway is cofactor biosynthesis; thiamine diphosphate biosynthesis. Catalyzes the synthesis of the hydroxymethylpyrimidine phosphate (HMP-P) moiety of thiamine from aminoimidazole ribotide (AIR) in a radical S-adenosyl-L-methionine (SAM)-dependent reaction. The sequence is that of Phosphomethylpyrimidine synthase from Burkholderia mallei (strain NCTC 10247).